Reading from the N-terminus, the 58-residue chain is Large ribosomal subunit protein bL32 (58 aa).

It belongs to the bacterial ribosomal protein bL32 family.

The polypeptide is Large ribosomal subunit protein bL32 (Sulfurihydrogenibium sp. (strain YO3AOP1)).